The sequence spans 211 residues: Protein CHLORORESPIRATORY REDUCTION 41, chloroplastic (211 aa).

The N-terminal 38 residues, methionine 1 to lysine 38, are a transit peptide targeting the chloroplast. The stretch at alanine 136–methionine 163 forms a coiled coil.

Biogenesis factor component of the plastidial NDH subcomplex A.

It is found in the plastid. It localises to the chloroplast. The protein resides in the chloroplast stroma. Functionally, required for both formation and activity of the chloroplast NAD(P)H dehydrogenase (NDH) complex of the photosynthetic electron transport chain. Functions in assembly or stabilization of the NDH complex; probably involved, together with NdhO and NdhH, in the formation of an NDH subcomplex A assembly intermediate (NAI500). The sequence is that of Protein CHLORORESPIRATORY REDUCTION 41, chloroplastic from Arabidopsis thaliana (Mouse-ear cress).